The chain runs to 338 residues: Ketol-acid reductoisomerase (NADP(+)) (338 aa).

Residues Met1–Thr181 enclose the KARI N-terminal Rossmann domain. Residues Tyr24–Gln27, Arg47, Ser50, Ser52, and Asp82–Gln85 each bind NADP(+). His107 is an active-site residue. An NADP(+)-binding site is contributed by Gly133. The KARI C-terminal knotted domain maps to Thr182 to Ile327. 4 residues coordinate Mg(2+): Asp190, Glu194, Glu226, and Glu230. Ser251 contacts substrate.

It belongs to the ketol-acid reductoisomerase family. Requires Mg(2+) as cofactor.

It catalyses the reaction (2R)-2,3-dihydroxy-3-methylbutanoate + NADP(+) = (2S)-2-acetolactate + NADPH + H(+). The enzyme catalyses (2R,3R)-2,3-dihydroxy-3-methylpentanoate + NADP(+) = (S)-2-ethyl-2-hydroxy-3-oxobutanoate + NADPH + H(+). Its pathway is amino-acid biosynthesis; L-isoleucine biosynthesis; L-isoleucine from 2-oxobutanoate: step 2/4. The protein operates within amino-acid biosynthesis; L-valine biosynthesis; L-valine from pyruvate: step 2/4. Its function is as follows. Involved in the biosynthesis of branched-chain amino acids (BCAA). Catalyzes an alkyl-migration followed by a ketol-acid reduction of (S)-2-acetolactate (S2AL) to yield (R)-2,3-dihydroxy-isovalerate. In the isomerase reaction, S2AL is rearranged via a Mg-dependent methyl migration to produce 3-hydroxy-3-methyl-2-ketobutyrate (HMKB). In the reductase reaction, this 2-ketoacid undergoes a metal-dependent reduction by NADPH to yield (R)-2,3-dihydroxy-isovalerate. This Saccharophagus degradans (strain 2-40 / ATCC 43961 / DSM 17024) protein is Ketol-acid reductoisomerase (NADP(+)).